We begin with the raw amino-acid sequence, 191 residues long: Heme-binding protein 1 (191 aa).

Belongs to the HEBP family. In terms of assembly, monomer.

It localises to the cytoplasm. Its function is as follows. May bind free porphyrinogens that may be present in the cell and thus facilitate removal of these potentially toxic compound. Binds with a high affinity to one molecule of heme or porphyrins. It binds metalloporphyrins, free porphyrins and N-methylprotoporphyrin with similar affinities. This is Heme-binding protein 1 (HEBP1) from Bos taurus (Bovine).